We begin with the raw amino-acid sequence, 285 residues long: Elongation factor Ts (285 aa).

The segment at 75-78 is involved in Mg(2+) ion dislocation from EF-Tu; it reads TDFV.

This sequence belongs to the EF-Ts family.

It localises to the cytoplasm. Functionally, associates with the EF-Tu.GDP complex and induces the exchange of GDP to GTP. It remains bound to the aminoacyl-tRNA.EF-Tu.GTP complex up to the GTP hydrolysis stage on the ribosome. This is Elongation factor Ts from Alcanivorax borkumensis (strain ATCC 700651 / DSM 11573 / NCIMB 13689 / SK2).